We begin with the raw amino-acid sequence, 308 residues long: Homeobox protein abdominal-A homolog (308 aa).

Residues 138–197 (RRRGRQTYTRFQTLELEKEFHFNHYLTRRRRIEIAHALCLTERQIKIWFQNRRMKLKKEL) constitute a DNA-binding region (homeobox). A compositionally biased stretch (basic and acidic residues) spans 207–221 (ARREREEQDKMKNES). The interval 207 to 277 (ARREREEQDK…SGNLGSHLHH (71 aa)) is disordered. Residues 223–247 (KSAQQHHSQKQAQQEHTVVGSQQTS) show a composition bias toward low complexity. The segment covering 248–269 (NGGGTGGGTGGSGGAGSGGSSG) has biased composition (gly residues).

This sequence belongs to the Antp homeobox family.

Its subcellular location is the nucleus. Its function is as follows. Sequence-specific transcription factor which is part of a developmental regulatory system that provides cells with specific positional identities on the anterior-posterior axis. This is Homeobox protein abdominal-A homolog from Anopheles gambiae (African malaria mosquito).